The primary structure comprises 464 residues: Chitobiosyldiphosphodolichol beta-mannosyltransferase (464 aa).

At 1–2 the chain is on the lumenal side; the sequence is MA. The helical transmembrane segment at 3-23 threads the bilayer; sequence ASCLVLLALCLLLPLLLLGGW. Residues 24-99 are Cytoplasmic-facing; the sequence is KRWRRGRTAR…ELQSLAVGPR (76 aa). An intramembrane region (helical) is located at residues 100-120; that stretch reads VFQYGVKVVFQAMYLLWKLMW. The Cytoplasmic portion of the chain corresponds to 121 to 464; sequence REPGAYIFLQ…QTVLPLVMDT (344 aa). Residue Ser242 is modified to Phosphoserine. The segment at 242-261 is disordered; the sequence is SPFRARSEPEDPATERSAFT.

It belongs to the glycosyltransferase group 1 family. Glycosyltransferase 33 subfamily.

The protein resides in the endoplasmic reticulum membrane. It catalyses the reaction an N,N'-diacetylchitobiosyl-diphospho-di-trans,poly-cis-dolichol + GDP-alpha-D-mannose = a beta-D-Man-(1-&gt;4)-beta-D-GlcNAc-(1-&gt;4)-alpha-D-GlcNAc-diphospho-di-trans,poly-cis-dolichol + GDP + H(+). The protein operates within protein modification; protein glycosylation. Its function is as follows. Mannosyltransferase that operates in the biosynthetic pathway of dolichol-linked oligosaccharides, the glycan precursors employed in protein asparagine (N)-glycosylation. The assembly of dolichol-linked oligosaccharides begins on the cytosolic side of the endoplasmic reticulum membrane and finishes in its lumen. The sequential addition of sugars to dolichol pyrophosphate produces dolichol-linked oligosaccharides containing fourteen sugars, including two GlcNAcs, nine mannoses and three glucoses. Once assembled, the oligosaccharide is transferred from the lipid to nascent proteins by oligosaccharyltransferases. Catalyzes, on the cytoplasmic face of the endoplasmic reticulum, the addition of the first mannose residues to the dolichol-linked oligosaccharide chain, to produce Man1GlcNAc(2)-PP-dolichol core oligosaccharide. Man1GlcNAc(2)-PP-dolichol is a substrate for ALG2, the following enzyme in the biosynthetic pathway. This chain is Chitobiosyldiphosphodolichol beta-mannosyltransferase, found in Pongo abelii (Sumatran orangutan).